Consider the following 123-residue polypeptide: Small ribosomal subunit protein uS12cz/uS12cy (123 aa).

This sequence belongs to the universal ribosomal protein uS12 family. In terms of assembly, part of the 30S ribosomal subunit.

It is found in the plastid. The protein localises to the chloroplast. With S4 and S5 plays an important role in translational accuracy. Located at the interface of the 30S and 50S subunits. This Daucus carota (Wild carrot) protein is Small ribosomal subunit protein uS12cz/uS12cy (rps12-A).